The following is an 894-amino-acid chain: UPF0182 protein GSU2333 (894 aa).

A run of 7 helical transmembrane segments spans residues 6 to 26 (FLLI…LITF), 50 to 70 (VGAG…NLYF), 98 to 118 (MVQM…LLAG), 162 to 182 (KGFV…VYFF), 203 to 223 (LAIL…LDAV), 250 to 270 (ILTL…WKGA), and 275 to 295 (LIPP…YPAM).

It belongs to the UPF0182 family.

The protein resides in the cell membrane. The sequence is that of UPF0182 protein GSU2333 from Geobacter sulfurreducens (strain ATCC 51573 / DSM 12127 / PCA).